A 762-amino-acid polypeptide reads, in one-letter code: Serine/threonine-protein kinase PLK4 (762 aa).

The Protein kinase domain maps to Tyr-14–Met-268. ATP contacts are provided by residues Leu-20–Val-28 and Lys-43. Catalysis depends on Asp-139, which acts as the Proton acceptor. In terms of domain architecture, Cryptic POLO box 1 (CPB1) spans Ala-383 to Lys-498. The Cryptic POLO box 2 (CPB2) domain occupies Thr-499–Pro-602. The region spanning Pro-657–Ser-736 is the POLO box domain.

Belongs to the protein kinase superfamily. Ser/Thr protein kinase family. CDC5/Polo subfamily. Homodimer. Post-translationally, ubiquitinated by the SCF(Slimb) ubiquitin ligase complex; leading to its degradation by the proteasome during interphase and regulating centriole number and ensuring the block to centriole reduplication.

The protein resides in the cytoplasm. The protein localises to the cytoskeleton. It is found in the microtubule organizing center. Its subcellular location is the centrosome. It localises to the centriole. It carries out the reaction L-seryl-[protein] + ATP = O-phospho-L-seryl-[protein] + ADP + H(+). The catalysed reaction is L-threonyl-[protein] + ATP = O-phospho-L-threonyl-[protein] + ADP + H(+). Serine/threonine-protein kinase that plays a central role in centriole duplication. Able to trigger procentriole formation on the surface of the mother centriole cylinder, using mother centriole as a platform, leading to the recruitment of centriole biogenesis proteins such as sas-6. When overexpressed, it is able to induce centrosome amplification through the simultaneous generation of multiple procentrioles adjoining each parental centriole during S phase. Centrosome amplification following overexpression can initiate tumorigenesis, highlighting the importance of centrosome regulation in cancers. The chain is Serine/threonine-protein kinase PLK4 (SAK) from Drosophila grimshawi (Hawaiian fruit fly).